The sequence spans 130 residues: Small ribosomal subunit protein uS11 (130 aa).

The protein belongs to the universal ribosomal protein uS11 family. In terms of assembly, part of the 30S ribosomal subunit. Interacts with proteins S7 and S18. Binds to IF-3.

In terms of biological role, located on the platform of the 30S subunit, it bridges several disparate RNA helices of the 16S rRNA. Forms part of the Shine-Dalgarno cleft in the 70S ribosome. The chain is Small ribosomal subunit protein uS11 from Borreliella afzelii (strain PKo) (Borrelia afzelii).